The primary structure comprises 496 residues: Nectin 1a (496 aa).

An N-terminal signal peptide occupies residues 1 to 20 (MMFINLLLRLMCVFLIGADG). Residues 21–349 (QMVQMESSKA…FQDQQQAGVV (329 aa)) are Extracellular-facing. The region spanning 34-138 (GSQVELPCQF…GNRENMVNLT (105 aa)) is the Ig-like V-type domain. The cysteines at positions 41 and 121 are disulfide-linked. N-linked (GlcNAc...) asparagine glycans are attached at residues asparagine 62 and asparagine 136. 2 Ig-like C2-type domains span residues 143 to 238 (PMIQ…VTLN) and 243 to 330 (PEVI…VIVT). Disulfide bonds link cysteine 168–cysteine 222 and cysteine 265–cysteine 312. Asparagine 282 is a glycosylation site (N-linked (GlcNAc...) asparagine). A helical membrane pass occupies residues 350-370 (IGGAVVCGTVLLAAVTLLVVF). At 371-496 (LYRRRCMFKG…SVISKEEWYV (126 aa)) the chain is on the cytoplasmic side.

The protein belongs to the nectin family. As to quaternary structure, cis- and trans-homodimer. Can form trans-heterodimers. In terms of tissue distribution, expressed in the developing eye and nervous system.

The protein resides in the cell membrane. Its subcellular location is the cell junction. It localises to the adherens junction. In terms of biological role, cell adhesion molecule that promotes cell-cell contacts and plays important roles in the development of the nervous system. Acts by forming homophilic or heterophilic trans-dimers. The protein is Nectin 1a of Danio rerio (Zebrafish).